The primary structure comprises 51 residues: Cytoplasmic FMR1-interacting protein 1 (51 aa).

Belongs to the CYFIP family. As to quaternary structure, component of the WAVE1 complex composed of ABI2, CYFIP1 or CYFIP2, BRK1, NCKAP1 and WASF1/WAVE1. Within the complex, a heterodimer containing NCKAP1 and CYFIP1 interacts with a heterotrimer formed by WAVE1, ABI2 and BRK1. Component of the CYFIP1-EIF4E-FMR1 complex which is composed of CYFIP, EIF4E and FMR1. Interacts with FMR1 but does not bind to related proteins FXR1 or FXR2. Interaction with EIF4E stimulates FMR1 binding. Component of the WAVE2 complex composed of ABI1, CYFIP1/SRA1, NCKAP1/NAP1 (NCKAP1l/HEM1 in hematopoietic cells) and WASF2/WAVE2. Interacts with the active GTP-bound form of RAC1. Interacts through its C-terminus with the C-terminus of DPYSL2/CRMP2 which is necessary for DPYSL2-induced axon outgrowth. Interacts with NYAP1, NYAP2 and MYO16. Interacts with TMEM108 (via N-terminus); the interaction associates TMEM108 with the WAVE1 complex.

It localises to the cytoplasm. The protein localises to the perinuclear region. The protein resides in the cell projection. It is found in the lamellipodium. Its subcellular location is the ruffle. It localises to the synapse. The protein localises to the synaptosome. Component of the CYFIP1-EIF4E-FMR1 complex which binds to the mRNA cap and mediates translational repression. In the CYFIP1-EIF4E-FMR1 complex this subunit is an adapter between EIF4E and FMR1. Promotes the translation repression activity of FMR1 in brain probably by mediating its association with EIF4E and mRNA. Regulates formation of membrane ruffles and lamellipodia. Plays a role in axon outgrowth. Binds to F-actin but not to RNA. Part of the WAVE complex that regulates actin filament reorganization via its interaction with the Arp2/3 complex. Actin remodeling activity is regulated by RAC1. Regulator of epithelial morphogenesis. As component of the WAVE1 complex, required for BDNF-NTRK2 endocytic trafficking and signaling from early endosomes. The protein is Cytoplasmic FMR1-interacting protein 1 of Bos taurus (Bovine).